The following is a 284-amino-acid chain: NAD kinase (284 aa).

The Proton acceptor role is filled by Asp-70. NAD(+) is bound by residues 70–71 (DG), 139–140 (NE), Lys-167, Asp-169, Leu-177, 180–185 (TAYNLS), and Gln-236.

The protein belongs to the NAD kinase family. Requires a divalent metal cation as cofactor.

The protein resides in the cytoplasm. It catalyses the reaction NAD(+) + ATP = ADP + NADP(+) + H(+). In terms of biological role, involved in the regulation of the intracellular balance of NAD and NADP, and is a key enzyme in the biosynthesis of NADP. Catalyzes specifically the phosphorylation on 2'-hydroxyl of the adenosine moiety of NAD to yield NADP. This chain is NAD kinase, found in Helicobacter pylori (strain P12).